An 824-amino-acid polypeptide reads, in one-letter code: MDEDEKDRAKRASRNKSEKKRRDQFNVLIKELSSMLPGNTRKMDKTTVLEKVIGFLQKHNEVSAQTEICDIQQDWKPSFLSNEEFTQLMLEALDGFIIAVTTDGSIIYVSDSITPLLGHLPSDVMDQNLLNFLPEQEHSEVYKILSSHMLVTDSPSPEYLKSDSDLEFYCHLLRGSLNPKEFPTYEYIKFVGNFRSYNNVPSPSCNGFDNTLSRPCRVPLGKEVCFIATVRLATPQFLKEMCIVDEPLEEFTSRHSLEWKFLFLDHRAPPIIGYLPFEVLGTSGYDYYHIDDLELLARCHQHLMQFGKGKSCCYRFLTKGQQWIWLQTHYYITYHQWNSKPEFIVCTHSVVSYADVRVERRQELALEDPPSEALHSSALKDKGSSLEPRQHFNTLDVGASGLNTSHSPSASSRSSHKSSHTAMSEPTSTPTKLMAEASTPALPRSATLPQELPVPGLSQAATMPAPLPSPSSCDLTQQLLPQTVLQSTPAPMAQFSAQFSMFQTIKDQLEQRTRILQANIRWQQEELHKIQEQLCLVQDSNVQMFLQQPAVSLSFSSTQRPEAQQQLQQRSAAVTQPQLGAGPQLPGQISSAQVTSQHLLRESSVISTQGPKPMRSSQLMQSSGRSGSSLVSPFSSATAALPPSLNLTTPASTSQDASQCQPSPDFSHDRQLRLLLSQPIQPMMPGSCDARQPSEVSRTGRQVKYAQSQTVFQNPDAHPANSSSAPMPVLLMGQAVLHPSFPASQPSPLQPAQARQQPPQHYLQVQAPTSLHSEQQDSLLLSTYSQQPGTLGYPQPPPAQPQPLRPPRRVSSLSESSGLQQPPR.

Residues 1–10 show a composition bias toward basic and acidic residues; it reads MDEDEKDRAK. Positions 1-21 are disordered; sequence MDEDEKDRAKRASRNKSEKKR. The segment at 1–61 is sufficient for heterodimer formation with BMAL1, E-box binding and for the effect of NADPH; the sequence is MDEDEKDRAK…VIGFLQKHNE (61 aa). Positions 9–59 constitute a bHLH domain; the sequence is AKRASRNKSEKKRRDQFNVLIKELSSMLPGNTRKMDKTTVLEKVIGFLQKH. Residues 82 to 152 enclose the PAS 1 domain; it reads NEEFTQLMLE…KILSSHMLVT (71 aa). His119 and His171 together coordinate heme b. The PAS 2 domain occupies 237–307; the sequence is FLKEMCIVDE…RCHQHLMQFG (71 aa). One can recognise a PAC domain in the interval 311–354; the sequence is SCCYRFLTKGQQWIWLQTHYYITYHQWNSKPEFIVCTHSVVSYA. 4 disordered regions span residues 367 to 437, 556 to 667, 681 to 704, and 739 to 824; these read EDPP…MAEA, SSTQ…PDFS, QPMM…RQVK, and PSFP…QPPR. Residues 378-390 are compositionally biased toward basic and acidic residues; that stretch reads ALKDKGSSLEPRQ. Over residues 421–431 the composition is skewed to polar residues; it reads TAMSEPTSTPT. The span at 559–576 shows a compositional bias: low complexity; sequence QRPEAQQQLQQRSAAVTQ. Over residues 587-610 the composition is skewed to polar residues; it reads GQISSAQVTSQHLLRESSVISTQG. A compositionally biased stretch (low complexity) spans 614 to 636; sequence MRSSQLMQSSGRSGSSLVSPFSS. Composition is skewed to polar residues over residues 645–664 and 694–704; these read LNLT…QPSP and SEVSRTGRQVK. Low complexity predominate over residues 739–760; that stretch reads PSFPASQPSPLQPAQARQQPPQ. Residues 766–789 are compositionally biased toward polar residues; it reads QAPTSLHSEQQDSLLLSTYSQQPG. Residues 794 to 805 show a composition bias toward pro residues; that stretch reads PQPPPAQPQPLR. Over residues 809-824 the composition is skewed to low complexity; it reads RVSSLSESSGLQQPPR.

Component of the circadian clock oscillator which includes the CRY proteins, CLOCK or NPAS2, BMAL1 or BMAL2, CSNK1D and/or CSNK1E, TIMELESS and the PER proteins. Efficient DNA binding requires dimerization with another bHLH protein. Forms a heterodimer with BMAL1 and this heterodimerization is required for E-box-dependent transactivation. Interacts with NCOA3, KAT2B, CREBBP and EP300. It depends on heme as a cofactor.

The protein resides in the nucleus. Its activity is regulated as follows. Carbon monoxide (CO) and the redox state of the cell can modulate the transcriptional activity of the NPAS2-BMAL1 heterodimer. NADH and NADPH enhance the DNA-binding activity of the heterodimer whereas CO binds the heme group in NPAS2 and inhibits the DNA-binding activity of the heterodimer. Its function is as follows. Transcriptional activator which forms a core component of the circadian clock. The circadian clock, an internal time-keeping system, regulates various physiological processes through the generation of approximately 24 hour circadian rhythms in gene expression, which are translated into rhythms in metabolism and behavior. It is derived from the Latin roots 'circa' (about) and 'diem' (day) and acts as an important regulator of a wide array of physiological functions including metabolism, sleep, body temperature, blood pressure, endocrine, immune, cardiovascular, and renal function. Consists of two major components: the central clock, residing in the suprachiasmatic nucleus (SCN) of the brain, and the peripheral clocks that are present in nearly every tissue and organ system. Both the central and peripheral clocks can be reset by environmental cues, also known as Zeitgebers (German for 'timegivers'). The predominant Zeitgeber for the central clock is light, which is sensed by retina and signals directly to the SCN. The central clock entrains the peripheral clocks through neuronal and hormonal signals, body temperature and feeding-related cues, aligning all clocks with the external light/dark cycle. Circadian rhythms allow an organism to achieve temporal homeostasis with its environment at the molecular level by regulating gene expression to create a peak of protein expression once every 24 hours to control when a particular physiological process is most active with respect to the solar day. Transcription and translation of core clock components (CLOCK, NPAS2, BMAL1, BMAL2, PER1, PER2, PER3, CRY1 and CRY2) plays a critical role in rhythm generation, whereas delays imposed by post-translational modifications (PTMs) are important for determining the period (tau) of the rhythms (tau refers to the period of a rhythm and is the length, in time, of one complete cycle). A diurnal rhythm is synchronized with the day/night cycle, while the ultradian and infradian rhythms have a period shorter and longer than 24 hours, respectively. Disruptions in the circadian rhythms contribute to the pathology of cardiovascular diseases, cancer, metabolic syndromes and aging. A transcription/translation feedback loop (TTFL) forms the core of the molecular circadian clock mechanism. Transcription factors, CLOCK or NPAS2 and BMAL1 or BMAL2, form the positive limb of the feedback loop, act in the form of a heterodimer and activate the transcription of core clock genes and clock-controlled genes (involved in key metabolic processes), harboring E-box elements (5'-CACGTG-3') within their promoters. The core clock genes: PER1/2/3 and CRY1/2 which are transcriptional repressors form the negative limb of the feedback loop and interact with the CLOCK|NPAS2-BMAL1|BMAL2 heterodimer inhibiting its activity and thereby negatively regulating their own expression. This heterodimer also activates nuclear receptors NR1D1/2 and RORA/B/G, which form a second feedback loop and which activate and repress BMAL1 transcription, respectively. The NPAS2-BMAL1 heterodimer positively regulates the expression of MAOA, F7 and LDHA and modulates the circadian rhythm of daytime contrast sensitivity by regulating the rhythmic expression of adenylate cyclase type 1 (ADCY1) in the retina. NPAS2 plays an important role in sleep homeostasis and in maintaining circadian behaviors in normal light/dark and feeding conditions and in the effective synchronization of feeding behavior with scheduled food availability. Regulates the gene transcription of key metabolic pathways in the liver and is involved in DNA damage response by regulating several cell cycle and DNA repair genes. Controls the circadian rhythm of NR0B2 expression by binding rhythmically to its promoter. Mediates the diurnal variation in the expression of GABARA1 receptor in the brain and contributes to the regulation of anxiety-like behaviors and GABAergic neurotransmission in the ventral striatum. The sequence is that of Neuronal PAS domain-containing protein 2 (NPAS2) from Homo sapiens (Human).